The sequence spans 338 residues: CRISPR-associated endonuclease Cas1 (338 aa).

The Mn(2+) site is built by E155, H220, and E235.

This sequence belongs to the CRISPR-associated endonuclease Cas1 family. In terms of assembly, homodimer, forms a heterotetramer with a Cas2 homodimer. The cofactor is Mg(2+). Requires Mn(2+) as cofactor.

Functionally, CRISPR (clustered regularly interspaced short palindromic repeat), is an adaptive immune system that provides protection against mobile genetic elements (viruses, transposable elements and conjugative plasmids). CRISPR clusters contain spacers, sequences complementary to antecedent mobile elements, and target invading nucleic acids. CRISPR clusters are transcribed and processed into CRISPR RNA (crRNA). Acts as a dsDNA endonuclease. Involved in the integration of spacer DNA into the CRISPR cassette. The type III-A Csm effector complex binds crRNA and acts as a crRNA-guided RNase, DNase and cyclic oligoadenylate synthase; binding of target RNA cognate to the crRNA is required for all activities. This chain is CRISPR-associated endonuclease Cas1, found in Mycobacterium tuberculosis (strain CDC 1551 / Oshkosh).